Consider the following 521-residue polypeptide: BAR/IMD domain-containing adapter protein 2 (521 aa).

An IMD domain is found at Met-1–Ser-250. Residues Asp-132–Asn-153 are a coiled coil. Phosphoserine occurs at positions 262, 324, 326, and 337. The disordered stretch occupies residues Val-299–Ala-370. A compositionally biased stretch (low complexity) spans Gln-321–Ser-335. A Phosphothreonine modification is found at Thr-341. Phosphoserine is present on Ser-347. Over residues Thr-349–Met-368 the composition is skewed to polar residues. At Thr-361 the chain carries Phosphothreonine. Phosphoserine is present on residues Ser-367, Ser-385, Ser-396, and Ser-455. The region spanning Asn-375–Ser-438 is the SH3 domain. The segment at His-445–Pro-480 is disordered. Over residues Ser-447–Asn-458 the composition is skewed to polar residues.

In terms of assembly, homodimer. Interacts with CDC42 and RAC1 that have been activated by GTP binding. Interacts with ATN1, ADGRB1, DIAPH1, EPS8, SHANK1, SHANK2, SHANK3, TIAM1, WASF1 and WASF2. Interacts with ENAH after recruitment of CDC42. Post-translationally, phosphorylated on tyrosine residues by INSR in response to insulin treatment.

It localises to the cytoplasm. Its subcellular location is the membrane. It is found in the cell projection. The protein localises to the filopodium. The protein resides in the ruffle. It localises to the cytoskeleton. Functionally, adapter protein that links membrane-bound small G-proteins to cytoplasmic effector proteins. Necessary for CDC42-mediated reorganization of the actin cytoskeleton and for RAC1-mediated membrane ruffling. Involved in the regulation of the actin cytoskeleton by WASF family members and the Arp2/3 complex. Plays a role in neurite growth. Acts syngeristically with ENAH to promote filipodia formation. Plays a role in the reorganization of the actin cytoskeleton in response to bacterial infection. Participates in actin bundling when associated with EPS8, promoting filopodial protrusions. This is BAR/IMD domain-containing adapter protein 2 (BAIAP2) from Cricetulus griseus (Chinese hamster).